We begin with the raw amino-acid sequence, 173 residues long: Crossover junction endodeoxyribonuclease RuvC (173 aa).

Active-site residues include Asp-8, Glu-68, and Asp-140. The Mg(2+) site is built by Asp-8, Glu-68, and Asp-140.

It belongs to the RuvC family. In terms of assembly, homodimer which binds Holliday junction (HJ) DNA. The HJ becomes 2-fold symmetrical on binding to RuvC with unstacked arms; it has a different conformation from HJ DNA in complex with RuvA. In the full resolvosome a probable DNA-RuvA(4)-RuvB(12)-RuvC(2) complex forms which resolves the HJ. Mg(2+) serves as cofactor.

Its subcellular location is the cytoplasm. The enzyme catalyses Endonucleolytic cleavage at a junction such as a reciprocal single-stranded crossover between two homologous DNA duplexes (Holliday junction).. Functionally, the RuvA-RuvB-RuvC complex processes Holliday junction (HJ) DNA during genetic recombination and DNA repair. Endonuclease that resolves HJ intermediates. Cleaves cruciform DNA by making single-stranded nicks across the HJ at symmetrical positions within the homologous arms, yielding a 5'-phosphate and a 3'-hydroxyl group; requires a central core of homology in the junction. The consensus cleavage sequence is 5'-(A/T)TT(C/G)-3'. Cleavage occurs on the 3'-side of the TT dinucleotide at the point of strand exchange. HJ branch migration catalyzed by RuvA-RuvB allows RuvC to scan DNA until it finds its consensus sequence, where it cleaves and resolves the cruciform DNA. The polypeptide is Crossover junction endodeoxyribonuclease RuvC (Saccharophagus degradans (strain 2-40 / ATCC 43961 / DSM 17024)).